The following is a 584-amino-acid chain: Alpha-glucosidase MAL12 (584 aa).

Asp-214 functions as the Nucleophile in the catalytic mechanism. Catalysis depends on Glu-276, which acts as the Proton donor.

The protein belongs to the glycosyl hydrolase 13 family.

It catalyses the reaction Hydrolysis of terminal, non-reducing (1-&gt;4)-linked alpha-D-glucose residues with release of alpha-D-glucose.. In Saccharomyces cerevisiae (strain ATCC 204508 / S288c) (Baker's yeast), this protein is Alpha-glucosidase MAL12 (MAL12).